A 167-amino-acid chain; its full sequence is Putative NADH-quinone oxidoreductase subunit B 2 (167 aa).

The protein belongs to the complex I 20 kDa subunit family. NDH-1 is composed of 14 different subunits. Subunits NuoB, C, D, E, F, and G constitute the peripheral sector of the complex.

It localises to the cell inner membrane. The catalysed reaction is a quinone + NADH + 5 H(+)(in) = a quinol + NAD(+) + 4 H(+)(out). NDH-1 shuttles electrons from NADH, via FMN and iron-sulfur (Fe-S) centers, to quinones in the respiratory chain. Couples the redox reaction to proton translocation (for every two electrons transferred, four hydrogen ions are translocated across the cytoplasmic membrane), and thus conserves the redox energy in a proton gradient. This is Putative NADH-quinone oxidoreductase subunit B 2 from Burkholderia pseudomallei (strain 1710b).